Here is a 480-residue protein sequence, read N- to C-terminus: MSENLQLSAEEMRQLGYQAVDLIIDHMNHLKSKPVSETIDSDILRNKLTESIPENGSDPKELLHFLNRNVFNQITHVDHPHFLAFVPGPNNYVGVVADFLASGFNVFPTAWIAGAGAEQIELTTINWLKSMLGFPDSAEGLFVSGGSMANLTALTVARQAKLNNDIENAVVYFSDQTHFSVDRALKVLGFKHHQICRIETDEHLRISVSALKKQIKEDRTKGKKPFCVIANAGTTNCGAVDSLNELADLCNDEDVWLHADGSYGAPAILSEKGSAMLQGIHRADSLTLDPHKWLFQPYDVGCVLIRNSQYLSKTFRMMPEYIKDSETNVEGEINFGECGIELSRRFRALKVWLSFKVFGVAAFRQAIDHGIMLAEQVEAFLGKAKDWEVVTPAQLGIVTFRYIPSELASTDTINEINKKLVKEITHRGFAMLSTTELKEKVVIRLCSINPRTTTEEMLQIMMKIKALAEEVSISYPCVAE.

Lysine 292 is modified (N6-(pyridoxal phosphate)lysine).

Belongs to the group II decarboxylase family. Pyridoxal 5'-phosphate is required as a cofactor.

It carries out the reaction L-tryptophan + H(+) = tryptamine + CO2. The catalysed reaction is L-phenylalanine + H(+) = 2-phenylethylamine + CO2. The enzyme catalyses 5-hydroxy-L-tryptophan + H(+) = serotonin + CO2. It catalyses the reaction L-dopa + H(+) = dopamine + CO2. In terms of biological role, involved in bacillamide C biosynthesis. Catalyzes the decarboxylation of L-tryptophan to tryptamine. The tryptamine obtained is then probably incorporated into the bacillamide C peptide, which is derived from the amino acids alanine, cysteine and tryptophan through nonribosomal peptide synthetase (NRPS) biosynthesis strategy. L-tryptophan is the best substrate, but the enzyme displays broad substrate specificity for various aromatic amino acids in vitro and it can also catalyze the decarboxylation of L-phenylalanine, 5-hydroxy-L-tryptophan (L-HTP) and L-DOPA, with lower efficiency. Exhibits weak activity with L-tyrosine. In Bacillus atrophaeus, this protein is Aromatic-L-amino-acid decarboxylase.